We begin with the raw amino-acid sequence, 377 residues long: Killer cell immunoglobulin-like receptor 2DL4 (377 aa).

Residues 1 to 21 (MSMSPTVIILACLGFFLDQSV) form the signal peptide. Residues 22 to 242 (WAHVGGQDKP…FKTGIARHLH (221 aa)) are Extracellular-facing. Ig-like C2-type domains are found at residues 44 to 104 (GGHV…HPHS) and 139 to 202 (GENV…FHGS). Cys51 and Cys97 are oxidised to a cystine. 2 N-linked (GlcNAc...) asparagine glycosylation sites follow: Asn141 and Asn175. A disulfide bridge links Cys146 with Cys195. Residues 243–263 (AVIRYSVAIILFTILPFFLLH) form a helical membrane-spanning segment. Residues 264 to 377 (RWCSKKKDAA…ASSNVPAAGI (114 aa)) are Cytoplasmic-facing. Residues 338-377 (PRALSPAHEHHSQALMGSSRETTALSQTQLASSNVPAAGI) form a disordered region. Over residues 352–377 (LMGSSRETTALSQTQLASSNVPAAGI) the composition is skewed to polar residues.

The protein belongs to the immunoglobulin superfamily. Interacts with peptide-bound HLA-G-B2M heterotrimeric complex. Interacts with ARRB2. As to expression, expressed in decidual NK cells and innate lymphoid cell type I (ILC1). Expressed in a subset of peripheral NK cells.

The protein resides in the cell membrane. Its subcellular location is the early endosome membrane. Its function is as follows. Receptor for non-classical major histocompatibility class Ib HLA-G molecules. Recognizes HLA-G in complex with B2M/beta-2 microglobulin and a nonamer self-peptide (peptide-bound HLA-G-B2M). In decidual NK cells, binds peptide-bound HLA-G-B2M complex and triggers NK cell senescence-associated secretory phenotype as a molecular switch to promote vascular remodeling and fetal growth in early pregnancy. May play a role in balancing tolerance and antiviral-immunity at maternal-fetal interface by keeping in check the effector functions of NK, CD8+ T cells and B cells. Upon interaction with peptide-bound HLA-G-B2M, initiates signaling from the endosomal compartment leading to downstream activation of PRKDC-XRCC5 and AKT1, and ultimately triggering NF-kappa-B-dependent pro-inflammatory response. This is Killer cell immunoglobulin-like receptor 2DL4 from Homo sapiens (Human).